Reading from the N-terminus, the 204-residue chain is uncharacterized protein (204 aa).

The protein resides in the mitochondrion. This is an uncharacterized protein from Arabidopsis thaliana (Mouse-ear cress).